A 151-amino-acid polypeptide reads, in one-letter code: Small ribosomal subunit protein bS6 (151 aa).

The disordered stretch occupies residues 98–151 (EESPIQKAEKENRERKNRAERRAAEAAAATETEKSESEESAEEETSTDTTGEEE). Acidic residues predominate over residues 135-151 (EESAEEETSTDTTGEEE).

The protein belongs to the bacterial ribosomal protein bS6 family.

Functionally, binds together with bS18 to 16S ribosomal RNA. In Teredinibacter turnerae (strain ATCC 39867 / T7901), this protein is Small ribosomal subunit protein bS6.